We begin with the raw amino-acid sequence, 826 residues long: Arsenite oxidase subunit AioA (826 aa).

Residues Cys-22, Cys-25, and Cys-29 each coordinate [3Fe-4S] cluster. His-196, Glu-204, Arg-420, and His-424 together coordinate substrate.

It belongs to the prokaryotic molybdopterin-containing oxidoreductase family. In terms of assembly, heterodimer consisting of a large and a small subunit. [3Fe-4S] cluster is required as a cofactor. It depends on Mo-bis(molybdopterin guanine dinucleotide) as a cofactor.

It carries out the reaction 2 oxidized [azurin] + arsenite + H2O = 2 reduced [azurin] + arsenate + 3 H(+). Its function is as follows. Involved in the detoxification of arsenic. Oxidizes As(III)O3(3-) (arsenite) to the somewhat less toxic As(V)O4(3-) (arsenate). The polypeptide is Arsenite oxidase subunit AioA (aioA) (Alcaligenes faecalis).